The chain runs to 177 residues: Glia associated membrane protein glam-1 (177 aa).

A run of 3 helical transmembrane segments spans residues 19–39, 42–62, and 76–96; these read PLVV…FWMS, FGMA…LFGA, and VTFA…VVFA.

The protein resides in the membrane. This chain is Glia associated membrane protein glam-1, found in Caenorhabditis elegans.